Consider the following 155-residue polypeptide: Small ribosomal subunit protein uS7cz/uS7cy (155 aa).

Belongs to the universal ribosomal protein uS7 family. As to quaternary structure, part of the 30S ribosomal subunit.

It is found in the plastid. In terms of biological role, one of the primary rRNA binding proteins, it binds directly to 16S rRNA where it nucleates assembly of the head domain of the 30S subunit. This chain is Small ribosomal subunit protein uS7cz/uS7cy (rps7-A), found in Epifagus virginiana (Beechdrops).